The chain runs to 731 residues: Radial spoke head 10 homolog B (731 aa).

The interval 1–69 (MARGDNMKSS…PNENQPIGEH (69 aa)) is disordered. Residues 7–17 (MKSSNKSTPEP) show a composition bias toward polar residues. Low complexity-rich tracts occupy residues 18 to 36 (TLSK…SESV) and 46 to 57 (SSSAVCSASTVS). MORN repeat units lie at residues 86–108 (YEGE…GGHV), 109–131 (YKGS…DGLK), 132–154 (YQGD…NGST), 155–177 (YEGE…KTLT), 179–201 (YRGQ…QEAT), 204–226 (YKGE…SGNV), 227–249 (YEGQ…DLDQ), 251–273 (YSGQ…RKRA), 284–306 (YTGD…SGAL), and 307–329 (YCGQ…NGRV). Disordered regions lie at residues 353–377 (TTPF…SPLG) and 709–731 (KQEQ…TSIH). The span at 363-377 (SKGASQSSSNASPLG) shows a compositional bias: low complexity. Over residues 722–731 (VTTTSVTSIH) the composition is skewed to polar residues.

The protein localises to the cytoplasm. Its subcellular location is the cytoskeleton. It localises to the cilium axoneme. It is found in the cell projection. The protein resides in the cilium. The protein localises to the flagellum. Its function is as follows. May function as part of axonemal radial spoke complexes. Radial spoke complexes are important for ciliary motility. The sequence is that of Radial spoke head 10 homolog B (rsph10b) from Danio rerio (Zebrafish).